The primary structure comprises 340 residues: Cell invasion protein SipD (340 aa).

Disordered stretches follow at residues 1 to 26 (MLNI…PSAS) and 57 to 76 (QAQQ…NDER). Residues 291–319 (FKAQEENLKTTLQTLTQKYSNANSLYDNL) are a coiled coil.

It belongs to the invasin protein D family.

The protein resides in the secreted. Functionally, required for translocation of effector proteins via the type III secretion system SPI-1, which is essential for an efficient bacterial internalization. Probably acts by modulating the secretion of SipA, SipB, and SipC. In Salmonella typhi, this protein is Cell invasion protein SipD (sipD).